Here is a 290-residue protein sequence, read N- to C-terminus: Plasma membrane ascorbate-dependent reductase CYBRD1 (290 aa).

Residues 1 to 7 lie on the Cytoplasmic side of the membrane; that stretch reads MAMEGYR. The chain crosses the membrane as a helical span at residues 8-32; sequence GFLGLLVSALLVGFLSVIFVLIWVL. Residues 15–220 form the Cytochrome b561 domain; that stretch reads SALLVGFLSV…FGALIFWIVT (206 aa). Residues 33-47 are Extracellular-facing; the sequence is HFREGLGWNGSGLEF. The helical transmembrane segment at 48-69 threads the bilayer; it reads NWHPVLAVTGFVFIQGIAIIVY. His-50, Arg-70, and Lys-79 together coordinate heme b. Topologically, residues 70–78 are cytoplasmic; the sequence is RLPWTWKCS. L-ascorbate is bound by residues Lys-79 and Lys-83. Residues 79–105 traverse the membrane as a helical segment; that stretch reads KLLMKSIHAGLNAVAAILAIISVVAVF. His-86 is a heme b binding site. Topologically, residues 106–118 are extracellular; the sequence is EYHNVQKVPHMYS. His-108 contributes to the Fe(3+) binding site. Heme b-binding positions include 115–118 and His-120; that span reads HMYS. A helical transmembrane segment spans residues 119-144; sequence LHSWVGLTALILYIQQLVVGFFVFLL. The Cytoplasmic segment spans residues 145-151; that stretch reads PWAPPSL. An L-ascorbate-binding site is contributed by Arg-152. Residues 152-179 form a helical membrane-spanning segment; that stretch reads RAIVMPIHVYSGLLLFGTVIATVLMGVT. Heme b contacts are provided by His-159 and Glu-180. The Extracellular segment spans residues 180 to 197; sequence EKLFFVLKHPSYHSFPPE. The chain crosses the membrane as a helical span at residues 198–222; that stretch reads GVFTNTLGLLILVFGALIFWIVTRP. Residues 223–290 are Cytoplasmic-facing; that stretch reads QWKRPREPGS…LADSGQRSTM (68 aa). Position 225 (Lys-225) interacts with heme b. Residue Ser-232 is modified to Phosphoserine. The interval 257–290 is disordered; that stretch reads SMDAADPADAESSSEGAARKRTLGLADSGQRSTM. A compositionally biased stretch (low complexity) spans 260–272; it reads AADPADAESSSEG. Residue Thr-289 is modified to Phosphothreonine.

Homodimer. It depends on heme b as a cofactor. As to expression, highly expressed in the brush-border membrane of duodenal enterocytes (at protein level). Also expressed in liver and spleen.

It localises to the cell membrane. It is found in the apical cell membrane. The catalysed reaction is Fe(3+)(out) + L-ascorbate(in) = monodehydro-L-ascorbate radical(in) + Fe(2+)(out) + H(+). It carries out the reaction Cu(2+)(out) + L-ascorbate(in) = Cu(+)(out) + monodehydro-L-ascorbate radical(in) + H(+). The enzyme catalyses monodehydro-L-ascorbate radical(out) + L-ascorbate(in) = monodehydro-L-ascorbate radical(in) + L-ascorbate(out). Its function is as follows. Plasma membrane reductase that uses cytoplasmic ascorbate as an electron donor to reduce extracellular Fe(3+) into Fe(2+). Probably functions in dietary iron absorption at the brush border of duodenal enterocytes by producing Fe(2+), the divalent form of iron that can be transported into enterocytes. It is also able to reduce extracellular monodehydro-L-ascorbate and may be involved in extracellular ascorbate regeneration by erythrocytes in blood. May also act as a ferrireductase in airway epithelial cells. May also function as a cupric transmembrane reductase. This Mus musculus (Mouse) protein is Plasma membrane ascorbate-dependent reductase CYBRD1.